The chain runs to 57 residues: Large ribosomal subunit protein bL32 (57 aa).

The protein belongs to the bacterial ribosomal protein bL32 family.

This chain is Large ribosomal subunit protein bL32, found in Geobacillus kaustophilus (strain HTA426).